The following is a 403-amino-acid chain: Glucosyl-3-phosphoglycerate synthase (403 aa).

Asp-150 is an a divalent metal cation binding site. 189–192 (GRVT) serves as a coordination point for (2R)-3-phosphoglycerate. Residue His-273 participates in a divalent metal cation binding.

Belongs to the glycosyltransferase 2 family. As to quaternary structure, homodimer. Mn(2+) serves as cofactor. It depends on Co(2+) as a cofactor. Requires Mg(2+) as cofactor. Ni(2+) is required as a cofactor.

It catalyses the reaction an NDP-alpha-D-glucose + (2R)-3-phosphoglycerate = (2R)-2-O-(alpha-D-glucopyranosyl)-3-phospho-glycerate + a ribonucleoside 5'-diphosphate + H(+). Functionally, involved in the biosynthesis of 6-O-methylglucose lipopolysaccarides (MGLPs). Catalyzes the transfer of a glucose (Glc) moiety from uridine diphosphate (UDP-Glc) to the position 2 of 3-phospho-D-glycerate (3-PGA) to form glucosyl-3-phosphoglycerate (GPG). GpgS is most active with UDP-glucose, followed by GDP-glucose, ADP-glucose, and to a lesser extent, TDP-glucose. 3-PGA is the only acceptor for these glucosyl donors. The polypeptide is Glucosyl-3-phosphoglycerate synthase (Persephonella marina (strain DSM 14350 / EX-H1)).